We begin with the raw amino-acid sequence, 166 residues long: Interferon gamma (166 aa).

Positions 1–23 are cleaved as a signal peptide; that stretch reads MSYTTYFLAFQLCVTLCFSGSYC. Position 24 is a pyrrolidone carboxylic acid (Gln-24). Asn-39 and Asn-106 each carry an N-linked (GlcNAc...) asparagine glycan.

It belongs to the type II (or gamma) interferon family. Homodimer. Interacts with IFNGR1 (via extracellular domain); this interaction promotes IFNGR1 dimerization. In terms of tissue distribution, released primarily from activated T lymphocytes.

The protein resides in the secreted. In terms of biological role, type II interferon produced by immune cells such as T-cells and NK cells that plays crucial roles in antimicrobial, antiviral, and antitumor responses by activating effector immune cells and enhancing antigen presentation. Primarily signals through the JAK-STAT pathway after interaction with its receptor IFNGR1 to affect gene regulation. Upon IFNG binding, IFNGR1 intracellular domain opens out to allow association of downstream signaling components JAK2, JAK1 and STAT1, leading to STAT1 activation, nuclear translocation and transcription of IFNG-regulated genes. Many of the induced genes are transcription factors such as IRF1 that are able to further drive regulation of a next wave of transcription. Plays a role in class I antigen presentation pathway by inducing a replacement of catalytic proteasome subunits with immunoproteasome subunits. In turn, increases the quantity, quality, and repertoire of peptides for class I MHC loading. Increases the efficiency of peptide generation also by inducing the expression of activator PA28 that associates with the proteasome and alters its proteolytic cleavage preference. Up-regulates as well MHC II complexes on the cell surface by promoting expression of several key molecules such as cathepsins B/CTSB, H/CTSH, and L/CTSL. Participates in the regulation of hematopoietic stem cells during development and under homeostatic conditions by affecting their development, quiescence, and differentiation. The chain is Interferon gamma (IFNG) from Sus scrofa (Pig).